The primary structure comprises 270 residues: Putative pyruvate, phosphate dikinase regulatory protein (270 aa).

Position 150–157 (150–157 (GPSRTSKS)) interacts with ADP.

This sequence belongs to the pyruvate, phosphate/water dikinase regulatory protein family. PDRP subfamily.

The enzyme catalyses N(tele)-phospho-L-histidyl/L-threonyl-[pyruvate, phosphate dikinase] + ADP = N(tele)-phospho-L-histidyl/O-phospho-L-threonyl-[pyruvate, phosphate dikinase] + AMP + H(+). The catalysed reaction is N(tele)-phospho-L-histidyl/O-phospho-L-threonyl-[pyruvate, phosphate dikinase] + phosphate + H(+) = N(tele)-phospho-L-histidyl/L-threonyl-[pyruvate, phosphate dikinase] + diphosphate. Its function is as follows. Bifunctional serine/threonine kinase and phosphorylase involved in the regulation of the pyruvate, phosphate dikinase (PPDK) by catalyzing its phosphorylation/dephosphorylation. The polypeptide is Putative pyruvate, phosphate dikinase regulatory protein (Neorickettsia sennetsu (strain ATCC VR-367 / Miyayama) (Ehrlichia sennetsu)).